A 284-amino-acid chain; its full sequence is MTVETKDLPESNYLLDYDDTEKRRLREQHDLIKAYTGKLILAPLDLTKPNLKILDSGTFDGHWLTEAAKPLTTPLLTGTDISPAAFPNPPPQNTSFHIQSITDPWPASWQNTFDLVHQRLVLAGTTPTGGLDAVRNLAGLAKPGGWVQLIEGKLLAESQRTRFPALHRFHSFIERMLPGFGWNIRAGLMVGGWLGEVGLEEVGEMEVEIPVGRANGDGRLGAMAEKNLRDVMGVWRQASSKLPADSPFKASELEEIFVDWDKEIETIGSLLRFAVVWGRRPALD.

It belongs to the methyltransferase superfamily. LaeA methyltransferase family.

It functions in the pathway mycotoxin biosynthesis. Its function is as follows. N-methyltransferase; part of the gene cluster that mediates the biosynthesis of sirodesmin PL, an epipolythiodioxopiperazine (ETP) characterized by a disulfide bridged cyclic dipeptide and that acts as a phytotoxin which is involved in the blackleg didease of canola. SirD catalyzes the O-prenylation of L-tyrosine (L-Tyr) in the presence of dimethylallyl diphosphate (DMAPP) to yield 4-O-dimethylallyl-L-Tyr, and therefore represents probably the first pathway-specific enzyme in the biosynthesis of sirodesmin PL. 4-O-dimethylallyl-L-Tyr, then undergoes condensation with L-Ser in a reaction catalyzed by the non-ribosomal peptide synthase sirP to form the diketopiperazine (DKP) backbone. Further bishydroxylation of the DKP performed by the cytochrome P450 monooxygenase sirC leads to the production of the intermediate phomamide. This step is essential to form the reactive thiol group required for toxicity of sirodesmin PL. The next steps of sirodesmin biosynthesis are not well understood yet but some predictions could be made from intermediate compounds identification. Phomamide is converted into phomalizarine via oxidation, probably by sirT. Further oxidation, methylation (by sirM or sirN) and reduction steps convert phomalizarine to deacetyl sirodesmin. Finally, acetyltransferase sirH probably acetylates deacetyl sirodesmin to produce sirodesmin PL. The polypeptide is N-methyltransferase sirN (Leptosphaeria maculans (Blackleg fungus)).